An 860-amino-acid polypeptide reads, in one-letter code: DNA mismatch repair protein MutS (860 aa).

607–614 lines the ATP pocket; the sequence is GPNMSGKS.

The protein belongs to the DNA mismatch repair MutS family.

Its function is as follows. This protein is involved in the repair of mismatches in DNA. It is possible that it carries out the mismatch recognition step. This protein has a weak ATPase activity. The sequence is that of DNA mismatch repair protein MutS from Listeria monocytogenes serovar 1/2a (strain ATCC BAA-679 / EGD-e).